Consider the following 171-residue polypeptide: 3-hydroxydecanoyl-[acyl-carrier-protein] dehydratase (171 aa).

Residue H70 is part of the active site.

This sequence belongs to the thioester dehydratase family. FabA subfamily. Homodimer.

It is found in the cytoplasm. The catalysed reaction is a (3R)-hydroxyacyl-[ACP] = a (2E)-enoyl-[ACP] + H2O. The enzyme catalyses (3R)-hydroxydecanoyl-[ACP] = (2E)-decenoyl-[ACP] + H2O. It catalyses the reaction (2E)-decenoyl-[ACP] = (3Z)-decenoyl-[ACP]. It functions in the pathway lipid metabolism; fatty acid biosynthesis. In terms of biological role, necessary for the introduction of cis unsaturation into fatty acids. Catalyzes the dehydration of (3R)-3-hydroxydecanoyl-ACP to E-(2)-decenoyl-ACP and then its isomerization to Z-(3)-decenoyl-ACP. Can catalyze the dehydratase reaction for beta-hydroxyacyl-ACPs with saturated chain lengths up to 16:0, being most active on intermediate chain length. The polypeptide is 3-hydroxydecanoyl-[acyl-carrier-protein] dehydratase (Pseudomonas putida (strain W619)).